The sequence spans 239 residues: Lipoprotein-releasing system ATP-binding protein LolD (239 aa).

The 230-residue stretch at 10 to 239 (VELSGVRKDY…ADGPHRRSGA (230 aa)) folds into the ABC transporter domain. Residue 46–53 (GPSGSGKS) coordinates ATP.

Belongs to the ABC transporter superfamily. Lipoprotein translocase (TC 3.A.1.125) family. As to quaternary structure, the complex is composed of two ATP-binding proteins (LolD) and two transmembrane proteins (LolC and LolE).

The protein resides in the cell inner membrane. Its function is as follows. Part of the ABC transporter complex LolCDE involved in the translocation of mature outer membrane-directed lipoproteins, from the inner membrane to the periplasmic chaperone, LolA. Responsible for the formation of the LolA-lipoprotein complex in an ATP-dependent manner. This Anaeromyxobacter dehalogenans (strain 2CP-C) protein is Lipoprotein-releasing system ATP-binding protein LolD.